Reading from the N-terminus, the 305-residue chain is Protein-methionine-sulfoxide reductase catalytic subunit MsrP (305 aa).

Residues 1–54 constitute a signal peptide (tat-type signal); sequence MLIRKPADHLPSEITSESVYFNRRQFMAGAAGLLLSAETLAGLAAKKSPLSQLA. Mo-molybdopterin is bound by residues N69, 72-73, C126, T161, N209, R214, and 225-227; these read YE and SIK.

This sequence belongs to the MsrP family. Heterodimer of a catalytic subunit (MsrP) and a heme-binding subunit (MsrQ). It depends on Mo-molybdopterin as a cofactor. Predicted to be exported by the Tat system. The position of the signal peptide cleavage has not been experimentally proven.

Its subcellular location is the periplasm. The catalysed reaction is L-methionyl-[protein] + a quinone + H2O = L-methionyl-(S)-S-oxide-[protein] + a quinol. It carries out the reaction L-methionyl-[protein] + a quinone + H2O = L-methionyl-(R)-S-oxide-[protein] + a quinol. Its function is as follows. Part of the MsrPQ system that repairs oxidized periplasmic proteins containing methionine sulfoxide residues (Met-O), using respiratory chain electrons. Thus protects these proteins from oxidative-stress damage caused by reactive species of oxygen and chlorine generated by the host defense mechanisms. MsrPQ is essential for the maintenance of envelope integrity under bleach stress, rescuing a wide series of structurally unrelated periplasmic proteins from methionine oxidation. The catalytic subunit MsrP is non-stereospecific, being able to reduce both (R-) and (S-) diastereoisomers of methionine sulfoxide. The protein is Protein-methionine-sulfoxide reductase catalytic subunit MsrP of Chromobacterium violaceum (strain ATCC 12472 / DSM 30191 / JCM 1249 / CCUG 213 / NBRC 12614 / NCIMB 9131 / NCTC 9757 / MK).